We begin with the raw amino-acid sequence, 558 residues long: Dihydroxy-acid dehydratase (558 aa).

Residue C50 participates in [2Fe-2S] cluster binding. D82 contributes to the Mg(2+) binding site. C123 is a [2Fe-2S] cluster binding site. Mg(2+)-binding residues include D124 and K125. K125 is subject to N6-carboxylysine. [2Fe-2S] cluster is bound at residue C195. E447 provides a ligand contact to Mg(2+). S472 (proton acceptor) is an active-site residue.

The protein belongs to the IlvD/Edd family. As to quaternary structure, homodimer. [2Fe-2S] cluster is required as a cofactor. Mg(2+) serves as cofactor.

The enzyme catalyses (2R)-2,3-dihydroxy-3-methylbutanoate = 3-methyl-2-oxobutanoate + H2O. The catalysed reaction is (2R,3R)-2,3-dihydroxy-3-methylpentanoate = (S)-3-methyl-2-oxopentanoate + H2O. It participates in amino-acid biosynthesis; L-isoleucine biosynthesis; L-isoleucine from 2-oxobutanoate: step 3/4. Its pathway is amino-acid biosynthesis; L-valine biosynthesis; L-valine from pyruvate: step 3/4. Functionally, functions in the biosynthesis of branched-chain amino acids. Catalyzes the dehydration of (2R,3R)-2,3-dihydroxy-3-methylpentanoate (2,3-dihydroxy-3-methylvalerate) into 2-oxo-3-methylpentanoate (2-oxo-3-methylvalerate) and of (2R)-2,3-dihydroxy-3-methylbutanoate (2,3-dihydroxyisovalerate) into 2-oxo-3-methylbutanoate (2-oxoisovalerate), the penultimate precursor to L-isoleucine and L-valine, respectively. The polypeptide is Dihydroxy-acid dehydratase (Saccharolobus islandicus (strain M.16.27) (Sulfolobus islandicus)).